Consider the following 242-residue polypeptide: MMPLAEAGALAQGGGPSATEWACILRRKTPRHKQPTLLMVRASRRSGKTSAVLKAGRQSVSGRKNSTSKDLVTLGASSLREERGHPLHPRHRKAVHLRTRGRTRGWVQTLARMSRRTRGPVERAAAAAAAAAGGDAGHAPFPPPPAADGARAPRSPGQVTPRGLRLRLPRRESLLRGLCRPLRPLLGFRESDSAKPASLRLLQHTPSARRNYRIAGARLMRSNYPPPLSSAALRGAGPTRRN.

2 disordered regions span residues 43-70 and 112-162; these read SRRSGKTSAVLKAGRQSVSGRKNSTSKD and RMSR…VTPR. Residues 58 to 70 are compositionally biased toward polar residues; sequence QSVSGRKNSTSKD. 2 stretches are compositionally biased toward low complexity: residues 122–139 and 147–162; these read ERAAAAAAAAAGGDAGHA and ADGARAPRSPGQVTPR.

This is an uncharacterized protein from Homo sapiens (Human).